Here is a 310-residue protein sequence, read N- to C-terminus: Methionyl-tRNA formyltransferase (310 aa).

111–114 (SLLP) is a binding site for (6S)-5,6,7,8-tetrahydrofolate.

Belongs to the Fmt family.

The catalysed reaction is L-methionyl-tRNA(fMet) + (6R)-10-formyltetrahydrofolate = N-formyl-L-methionyl-tRNA(fMet) + (6S)-5,6,7,8-tetrahydrofolate + H(+). Attaches a formyl group to the free amino group of methionyl-tRNA(fMet). The formyl group appears to play a dual role in the initiator identity of N-formylmethionyl-tRNA by promoting its recognition by IF2 and preventing the misappropriation of this tRNA by the elongation apparatus. The protein is Methionyl-tRNA formyltransferase of Nitrobacter hamburgensis (strain DSM 10229 / NCIMB 13809 / X14).